Reading from the N-terminus, the 486-residue chain is uncharacterized protein (486 aa).

24 to 35 serves as a coordination point for NAD(+); that stretch reads IVHLGFGAFHRA.

Belongs to the mannitol dehydrogenase family. UxuB subfamily.

This is an uncharacterized protein from Escherichia coli (strain K12).